Reading from the N-terminus, the 403-residue chain is 4-hydroxy-3-methylbut-2-enyl diphosphate reductase (403 aa).

Position 66 (Cys-66) interacts with [4Fe-4S] cluster. His-96 contributes to the (2E)-4-hydroxy-3-methylbut-2-enyl diphosphate binding site. His-96 serves as a coordination point for dimethylallyl diphosphate. His-96 serves as a coordination point for isopentenyl diphosphate. Cys-157 serves as a coordination point for [4Fe-4S] cluster. His-185 provides a ligand contact to (2E)-4-hydroxy-3-methylbut-2-enyl diphosphate. His-185 is a binding site for dimethylallyl diphosphate. His-185 lines the isopentenyl diphosphate pocket. The active-site Proton donor is Glu-187. Residue Thr-250 coordinates (2E)-4-hydroxy-3-methylbut-2-enyl diphosphate. [4Fe-4S] cluster is bound at residue Cys-288. Residues Ser-317, Ser-318, Asn-319, and Ser-379 each coordinate (2E)-4-hydroxy-3-methylbut-2-enyl diphosphate. The dimethylallyl diphosphate site is built by Ser-317, Ser-318, Asn-319, and Ser-379. 4 residues coordinate isopentenyl diphosphate: Ser-317, Ser-318, Asn-319, and Ser-379.

It belongs to the IspH family. [4Fe-4S] cluster is required as a cofactor.

The enzyme catalyses isopentenyl diphosphate + 2 oxidized [2Fe-2S]-[ferredoxin] + H2O = (2E)-4-hydroxy-3-methylbut-2-enyl diphosphate + 2 reduced [2Fe-2S]-[ferredoxin] + 2 H(+). The catalysed reaction is dimethylallyl diphosphate + 2 oxidized [2Fe-2S]-[ferredoxin] + H2O = (2E)-4-hydroxy-3-methylbut-2-enyl diphosphate + 2 reduced [2Fe-2S]-[ferredoxin] + 2 H(+). The protein operates within isoprenoid biosynthesis; dimethylallyl diphosphate biosynthesis; dimethylallyl diphosphate from (2E)-4-hydroxy-3-methylbutenyl diphosphate: step 1/1. It participates in isoprenoid biosynthesis; isopentenyl diphosphate biosynthesis via DXP pathway; isopentenyl diphosphate from 1-deoxy-D-xylulose 5-phosphate: step 6/6. Its function is as follows. Catalyzes the conversion of 1-hydroxy-2-methyl-2-(E)-butenyl 4-diphosphate (HMBPP) into a mixture of isopentenyl diphosphate (IPP) and dimethylallyl diphosphate (DMAPP). Acts in the terminal step of the DOXP/MEP pathway for isoprenoid precursor biosynthesis. The polypeptide is 4-hydroxy-3-methylbut-2-enyl diphosphate reductase (Rippkaea orientalis (strain PCC 8801 / RF-1) (Cyanothece sp. (strain PCC 8801))).